The chain runs to 524 residues: Cytochrome P450 monooxygenase ankB (524 aa).

Residues 22–42 (FHALSIQAPGLLLGTLLFYLF) traverse the membrane as a helical segment. Cysteine 466 is a binding site for heme.

The protein belongs to the cytochrome P450 family. The cofactor is heme.

It localises to the membrane. The catalysed reaction is cyclo(L-arginyl-tyrosyl) + reduced [NADPH--hemoprotein reductase] + O2 = cyclo(L-arginyl-L-dehydrotyrosyl) + oxidized [NADPH--hemoprotein reductase] + 2 H2O + H(+). It functions in the pathway alkaloid biosynthesis. Cytochrome P450 monooxygenase; part of the ank cluster that mediates the biosynthesis of NK13650 C, a highly modified cyclo-arginine-tyrosine dipeptide. AnkB is responsible for desaturation of the ankA product cyclo-Arg-Tyr diketopiperazine, likely through hydroxylation of the benzylic position followed by dehydration to yield a dehydro-cyclodipeptide. Within the pathway, the cyclodipeptide synthase ankA acts as the scaffold-generating enzyme and is responsible for formation of the cyclo-Arg-Tyr diketopiperazine (cRY) from L-Arg and L-Tyr. The ankA product cRY is desaturated by the cytochrome P450 monooxygenase ankB to yield a dehydro-cyclodipeptide intermediate. The FAD-dependent monooxygenase ankC then installs the m-OH, ankD catalyzes the attachment of L-homoserine, and ankE ligates citrate to the ankD product to yield NK13650 B. The O-methyltransferase ankF is responsible for methylation of the C-17 phenol group of NK13650 B to produce NK13650 D. Amidation of NK13650 D with L-Asp by ankG then leads to the production of NK13650 C, whereas amidation of NK13650 B produces NK13650 A. This Aspergillus thermomutatus (Neosartorya pseudofischeri) protein is Cytochrome P450 monooxygenase ankB.